A 91-amino-acid chain; its full sequence is Large ribosomal subunit protein bL27 (91 aa).

The disordered stretch occupies residues 1 to 24; that stretch reads MAHKKGVGSSRNGRDSNPKMRGVK.

Belongs to the bacterial ribosomal protein bL27 family.

This Chloroflexus aggregans (strain MD-66 / DSM 9485) protein is Large ribosomal subunit protein bL27.